The following is a 90-amino-acid chain: Barrier-to-autointegration factor A (90 aa).

This sequence belongs to the BAF family. As to quaternary structure, homodimer. Interacts with nemp1a and nemp1b. In terms of processing, phosphorylated during S and M phases.

It localises to the nucleus. Its subcellular location is the chromosome. The protein resides in the nucleus envelope. It is found in the cytoplasm. Its function is as follows. Non-specific DNA-binding protein that plays key roles in mitotic nuclear reassembly, chromatin organization, DNA damage response, gene expression and intrinsic immunity against foreign DNA. Contains two non-specific double-stranded DNA (dsDNA)-binding sites which promote DNA cross-bridging. Plays a key role in nuclear membrane reformation at the end of mitosis by driving formation of a single nucleus in a spindle-independent manner. Transiently cross-bridges anaphase chromosomes via its ability to bridge distant DNA sites, leading to the formation of a dense chromatin network at the chromosome ensemble surface that limits membranes to the surface. Also acts as a negative regulator of innate immune activation by restricting CGAS activity toward self-DNA upon acute loss of nuclear membrane integrity. Outcompetes CGAS for DNA-binding, thereby preventing CGAS activation and subsequent damaging autoinflammatory responses. Also involved in DNA damage response; acts by inhibiting the ADP-ribosyltransferase activity of PARP1. Involved in the recognition of exogenous dsDNA in the cytosol: associates with exogenous dsDNA immediately after its appearance in the cytosol at endosome breakdown and is required to avoid autophagy. This chain is Barrier-to-autointegration factor A (banf1-a), found in Xenopus laevis (African clawed frog).